Consider the following 101-residue polypeptide: Small ribosomal subunit protein uS14 (101 aa).

This sequence belongs to the universal ribosomal protein uS14 family. Part of the 30S ribosomal subunit. Contacts proteins S3 and S10.

Functionally, binds 16S rRNA, required for the assembly of 30S particles and may also be responsible for determining the conformation of the 16S rRNA at the A site. The sequence is that of Small ribosomal subunit protein uS14 from Rhizobium johnstonii (strain DSM 114642 / LMG 32736 / 3841) (Rhizobium leguminosarum bv. viciae).